Consider the following 327-residue polypeptide: Spermidine/putrescine import ATP-binding protein PotA (327 aa).

Residues Ile-5–Ile-235 form the ABC transporter domain. Position 37 to 44 (Gly-37 to Thr-44) interacts with ATP.

The protein belongs to the ABC transporter superfamily. Spermidine/putrescine importer (TC 3.A.1.11.1) family. As to quaternary structure, the complex is composed of two ATP-binding proteins (PotA), two transmembrane proteins (PotB and PotC) and a solute-binding protein (PotD).

It localises to the cell membrane. It catalyses the reaction ATP + H2O + polyamine-[polyamine-binding protein]Side 1 = ADP + phosphate + polyamineSide 2 + [polyamine-binding protein]Side 1.. Part of the ABC transporter complex PotABCD involved in spermidine/putrescine import. Responsible for energy coupling to the transport system. The polypeptide is Spermidine/putrescine import ATP-binding protein PotA (Bacillus thuringiensis subsp. konkukian (strain 97-27)).